Here is a 139-residue protein sequence, read N- to C-terminus: Natriuretic peptides A (139 aa).

Positions 1-21 (MTALVLWGLLLLLGQHTQVNS) are cleaved as a signal peptide. A propeptide spanning residues 22–114 (HVLGRPFSAS…QDLLMSLRKR (93 aa)) is cleaved from the precursor. C118 and C134 form a disulfide bridge.

It belongs to the natriuretic peptide family.

The protein localises to the secreted. Hormone playing a key role in cardiovascular homeostasis through regulation of natriuresis, diuresis, and vasodilation. Has a cGMP-stimulating activity. This Takifugu rubripes (Japanese pufferfish) protein is Natriuretic peptides A (nppa).